A 1149-amino-acid polypeptide reads, in one-letter code: Beta-alanine-activating enzyme (1149 aa).

ATP is bound by residues 178–186 (TSGTTGLPK), Asp408, Arg422, and Lys543. The region spanning 570-646 (ASVRLKLQNL…DLLSHIMTET (77 aa)) is the Carrier domain. Ser605 carries the post-translational modification O-(pantetheine 4'-phosphoryl)serine. Positions 653–683 (PSKKRTADYSDSEASGKRQHKEMTTSSDTES) are disordered.

The protein belongs to the ATP-dependent AMP-binding enzyme family.

Covalently binds beta-alanine in an ATP-dependent manner to form a thioester bond with its phosphopantetheine group and transfers it to an, as yet, unknown acceptor. May be required for a post-translational protein modification or for post-transcriptional modification of an RNA. This is Beta-alanine-activating enzyme (aasdh) from Danio rerio (Zebrafish).